Consider the following 745-residue polypeptide: Inhibitor of nuclear factor kappa-B kinase subunit alpha (745 aa).

The region spanning 15 to 300 is the Protein kinase domain; the sequence is WEMRERLGTG…IDLTLKQPRC (286 aa). ATP-binding positions include 21–29 and K44; that span reads LGTGGFGNV. Phosphothreonine; by PKB/AKT1 and SGK1 is present on T23. D144 serves as the catalytic Proton acceptor. S176 is subject to Phosphoserine; by MAP3K14. Residue S180 is modified to Phosphoserine; by SGK1. The tract at residues 455–476 is leucine-zipper; sequence LLRYNANLTKMKNTLISASQQL. Positions 738 to 743 are NEMO-binding; that stretch reads LDWSWL.

It belongs to the protein kinase superfamily. Ser/Thr protein kinase family. I-kappa-B kinase subfamily. Component of the I-kappa-B-kinase (IKK) core complex consisting of CHUK, IKBKB and IKBKG; probably four alpha/CHUK-beta/IKBKB dimers are associated with four gamma/IKBKG subunits. The IKK core complex seems to associate with regulatory or adapter proteins to form a IKK-signalosome holo-complex. The IKK complex associates with TERF2IP/RAP1, leading to promote IKK-mediated phosphorylation of RELA/p65. Part of a complex composed of NCOA2, NCOA3, CHUK/IKKA, IKBKB, IKBKG and CREBBP. Part of a 70-90 kDa complex at least consisting of CHUK/IKKA, IKBKB, NFKBIA, RELA, ELP1 and MAP3K14. Directly interacts with TRPC4AP. May interact with TRAF2. Interacts with NALP2. May interact with MAVS/IPS1. Interacts with ARRB1 and ARRB2. Interacts with NLRC5; prevents CHUK phosphorylation and kinase activity. Interacts with PIAS1; this interaction induces PIAS1 phosphorylation. Interacts with ZNF268 isoform 2; the interaction is further increased in a TNF-alpha-dependent manner. Interacts with LRRC14. Interacts with SASH1. Directly interacts with DDX3X after the physiological activation of the TLR7 and TLR8 pathways; this interaction enhances CHUK autophosphorylation. Post-translationally, ubiquitinated by TRIM56 via 'Lys-63'-linked ubiquitination, promoting activation of CHUK/IKKA. In terms of processing, phosphorylated by MAP3K14/NIK, AKT and to a lesser extent by MEKK1, and dephosphorylated by PP2A. Autophosphorylated. As to expression, ubiquitous only for isoform 1, isoforms 2 and 3 are expressed predominantly in brain and T-lymphocytes.

The protein localises to the cytoplasm. The protein resides in the nucleus. The enzyme catalyses L-seryl-[I-kappa-B protein] + ATP = O-phospho-L-seryl-[I-kappa-B protein] + ADP + H(+). Its activity is regulated as follows. Activated when phosphorylated and inactivated when dephosphorylated. Its function is as follows. Serine kinase that plays an essential role in the NF-kappa-B signaling pathway which is activated by multiple stimuli such as inflammatory cytokines, bacterial or viral products, DNA damages or other cellular stresses. Acts as a part of the canonical IKK complex in the conventional pathway of NF-kappa-B activation and phosphorylates inhibitors of NF-kappa-B on serine residues. These modifications allow polyubiquitination of the inhibitors and subsequent degradation by the proteasome. In turn, free NF-kappa-B is translocated into the nucleus and activates the transcription of hundreds of genes involved in immune response, growth control, or protection against apoptosis. Negatively regulates the pathway by phosphorylating the scaffold protein TAXBP1 and thus promoting the assembly of the A20/TNFAIP3 ubiquitin-editing complex (composed of A20/TNFAIP3, TAX1BP1, and the E3 ligases ITCH and RNF11). Therefore, CHUK plays a key role in the negative feedback of NF-kappa-B canonical signaling to limit inflammatory gene activation. As part of the non-canonical pathway of NF-kappa-B activation, the MAP3K14-activated CHUK/IKKA homodimer phosphorylates NFKB2/p100 associated with RelB, inducing its proteolytic processing to NFKB2/p52 and the formation of NF-kappa-B RelB-p52 complexes. In turn, these complexes regulate genes encoding molecules involved in B-cell survival and lymphoid organogenesis. Also participates in the negative feedback of the non-canonical NF-kappa-B signaling pathway by phosphorylating and destabilizing MAP3K14/NIK. Within the nucleus, phosphorylates CREBBP and consequently increases both its transcriptional and histone acetyltransferase activities. Modulates chromatin accessibility at NF-kappa-B-responsive promoters by phosphorylating histones H3 at 'Ser-10' that are subsequently acetylated at 'Lys-14' by CREBBP. Additionally, phosphorylates the CREBBP-interacting protein NCOA3. Also phosphorylates FOXO3 and may regulate this pro-apoptotic transcription factor. Phosphorylates RIPK1 at 'Ser-25' which represses its kinase activity and consequently prevents TNF-mediated RIPK1-dependent cell death. Phosphorylates AMBRA1 following mitophagy induction, promoting AMBRA1 interaction with ATG8 family proteins and its mitophagic activity. This Mus musculus (Mouse) protein is Inhibitor of nuclear factor kappa-B kinase subunit alpha (Chuk).